The following is a 175-amino-acid chain: NADH-ubiquinone oxidoreductase chain 6 (175 aa).

6 helical membrane-spanning segments follow: residues 1–21, 24–44, 51–71, 87–107, 113–133, and 148–168; these read MMYI…GFSS, SPVY…GIIM, LGLV…GYTI, VVLS…VWLF, LVGF…GSFG, and YGFW…FIAI.

This sequence belongs to the complex I subunit 6 family. In terms of assembly, core subunit of respiratory chain NADH dehydrogenase (Complex I) which is composed of 45 different subunits.

It localises to the mitochondrion inner membrane. The catalysed reaction is a ubiquinone + NADH + 5 H(+)(in) = a ubiquinol + NAD(+) + 4 H(+)(out). Functionally, core subunit of the mitochondrial membrane respiratory chain NADH dehydrogenase (Complex I) which catalyzes electron transfer from NADH through the respiratory chain, using ubiquinone as an electron acceptor. Essential for the catalytic activity and assembly of complex I. The protein is NADH-ubiquinone oxidoreductase chain 6 (MT-ND6) of Mammuthus primigenius (Siberian woolly mammoth).